The sequence spans 366 residues: Chorismate synthase (366 aa).

Residues Arg48 and Arg54 each coordinate NADP(+). FMN contacts are provided by residues 125-127, 238-239, Gly278, 293-297, and Arg319; these read RSS, NA, and KPTSS.

It belongs to the chorismate synthase family. As to quaternary structure, homotetramer. It depends on FMNH2 as a cofactor.

The enzyme catalyses 5-O-(1-carboxyvinyl)-3-phosphoshikimate = chorismate + phosphate. It participates in metabolic intermediate biosynthesis; chorismate biosynthesis; chorismate from D-erythrose 4-phosphate and phosphoenolpyruvate: step 7/7. In terms of biological role, catalyzes the anti-1,4-elimination of the C-3 phosphate and the C-6 proR hydrogen from 5-enolpyruvylshikimate-3-phosphate (EPSP) to yield chorismate, which is the branch point compound that serves as the starting substrate for the three terminal pathways of aromatic amino acid biosynthesis. This reaction introduces a second double bond into the aromatic ring system. In Neisseria meningitidis serogroup C / serotype 2a (strain ATCC 700532 / DSM 15464 / FAM18), this protein is Chorismate synthase.